Reading from the N-terminus, the 659-residue chain is Probable acyl-coenzyme A oxidase acox-1.5 (659 aa).

Residues 148 to 151, 156 to 157, and Gly190 contribute to the FAD site; these read YAQT and GT. Substrate-binding positions include 284-287 and Arg294; that span reads KVGY. FAD is bound by residues Arg319 and 339–342; that span reads QQYR. ATP is bound by residues His395 and Gln403. Residue Gly410 coordinates FAD. 432–433 contributes to the substrate binding site; sequence YE. Glu433 functions as the Proton acceptor in the catalytic mechanism. An FAD-binding site is contributed by Glu435. 524–527 serves as a coordination point for ATP; that stretch reads KAAR. Residues 657 to 659 carry the Microbody targeting signal motif; that stretch reads SKL.

The protein belongs to the acyl-CoA oxidase family. In terms of assembly, homodimer. Requires FAD as cofactor.

Its subcellular location is the peroxisome. The protein operates within lipid metabolism; peroxisomal fatty acid beta-oxidation. Activated by ATP. ATP binding leads to a conformational change that promotes FAD cofactor binding and enzyme activity. ATP binding likely occurs during acox-1.5 folding and/or dimer formation. Involved in the first step of peroxisomal beta-oxidation by catalyzing the desaturation of fatty acid-derived side chains. The sequence is that of Probable acyl-coenzyme A oxidase acox-1.5 from Caenorhabditis elegans.